The following is a 338-amino-acid chain: Phenylalanine--tRNA ligase alpha subunit (338 aa).

Glu253 contacts Mg(2+).

It belongs to the class-II aminoacyl-tRNA synthetase family. Phe-tRNA synthetase alpha subunit type 1 subfamily. Tetramer of two alpha and two beta subunits. Mg(2+) serves as cofactor.

It is found in the cytoplasm. It catalyses the reaction tRNA(Phe) + L-phenylalanine + ATP = L-phenylalanyl-tRNA(Phe) + AMP + diphosphate + H(+). The polypeptide is Phenylalanine--tRNA ligase alpha subunit (Syntrophotalea carbinolica (strain DSM 2380 / NBRC 103641 / GraBd1) (Pelobacter carbinolicus)).